The following is a 437-amino-acid chain: Epsilon-sarcoglycan (437 aa).

At 1–317 (MLLFWWWELG…LKSRDYYTDF (317 aa)) the chain is on the extracellular side. Residue Asn200 is glycosylated (N-linked (GlcNAc...) asparagine). Residues 318–338 (LVTLAVPSAVALVLFLILAYI) traverse the membrane as a helical segment. Over 339–437 (MCCRREGVEK…QQQTTGKWYP (99 aa)) the chain is Cytoplasmic.

Belongs to the sarcoglycan alpha/epsilon family. Post-translationally, N-glycosylated. Ubiquitinated, leading to its degradation by the proteasome. In terms of tissue distribution, in both neural tissues including cerebellar cortex, striatum, cerebral cortex, thalamus and hippocampus, and non-neural tissues including quadriceps muscle, liver, kidney, spleen, lung, testis and heart. Widely distributed in the brain, with a robust signal obtained from regions with dense neuronal packing such as the pyramidal cell layer of the hippocampus, cerebellar molecular layer, and cerebral cortex. Levels are highest in kidney, moderate in brain and lung, and low in skeletal muscle, liver, spleen and testis.

The protein localises to the cell membrane. Its subcellular location is the sarcolemma. The protein resides in the cytoplasm. It localises to the cytoskeleton. It is found in the cell projection. The protein localises to the dendrite. Its subcellular location is the golgi apparatus. Component of the sarcoglycan complex, a subcomplex of the dystrophin-glycoprotein complex which forms a link between the F-actin cytoskeleton and the extracellular matrix. The polypeptide is Epsilon-sarcoglycan (Rattus norvegicus (Rat)).